We begin with the raw amino-acid sequence, 192 residues long: MDSQNKNSVDAMDGIESRGMKERGGRTNSFLVLRVLAFVLTSTAAIVHGVNNQTETVPIQLTSSMPPLYVPVVAKWHYLSAFVFFVVSNAIACSYAAISVMLSFCGKKSMVPIILTLDLLMVALLFSSNGAATAIGVMGYKGNSHVKWNKVCNVFGKFCNQVAASVVLSLIGSIVFVLLVMLTAFRLHNKSK.

The disordered stretch occupies residues 1–22; the sequence is MDSQNKNSVDAMDGIESRGMKE. Residues 1–29 are Cytoplasmic-facing; that stretch reads MDSQNKNSVDAMDGIESRGMKERGGRTNS. The chain crosses the membrane as a helical span at residues 30 to 50; it reads FLVLRVLAFVLTSTAAIVHGV. Residues 51–81 are Extracellular-facing; that stretch reads NNQTETVPIQLTSSMPPLYVPVVAKWHYLSA. N-linked (GlcNAc...) asparagine glycosylation is present at N52. Residues 82–102 traverse the membrane as a helical segment; the sequence is FVFFVVSNAIACSYAAISVML. Over 103–118 the chain is Cytoplasmic; that stretch reads SFCGKKSMVPIILTLD. The chain crosses the membrane as a helical span at residues 119–139; the sequence is LLMVALLFSSNGAATAIGVMG. The Extracellular portion of the chain corresponds to 140-161; sequence YKGNSHVKWNKVCNVFGKFCNQ. The helical transmembrane segment at 162–182 threads the bilayer; it reads VAASVVLSLIGSIVFVLLVML. The Cytoplasmic segment spans residues 183-192; the sequence is TAFRLHNKSK.

This sequence belongs to the Casparian strip membrane proteins (CASP) family. As to quaternary structure, homodimer and heterodimers.

It is found in the cell membrane. The chain is CASP-like protein 1E1 from Ricinus communis (Castor bean).